The following is a 336-amino-acid chain: Tryptophan--tRNA ligase (336 aa).

Residues Q9–S11 and G17–N18 each bind ATP. A 'HIGH' region motif is present at residues P10–N18. D134 serves as a coordination point for L-tryptophan. Residues G146–D148, I189, and K198–S202 each bind ATP. Residues K198 to S202 carry the 'KMSKS' region motif.

Belongs to the class-I aminoacyl-tRNA synthetase family. Homodimer.

It localises to the cytoplasm. It catalyses the reaction tRNA(Trp) + L-tryptophan + ATP = L-tryptophyl-tRNA(Trp) + AMP + diphosphate + H(+). Catalyzes the attachment of tryptophan to tRNA(Trp). The chain is Tryptophan--tRNA ligase from Enterococcus faecalis (strain ATCC 700802 / V583).